The sequence spans 397 residues: Stearoyl-[acyl-carrier-protein] 9-desaturase, chloroplastic (397 aa).

The N-terminal 33 residues, 1-33, are a transit peptide targeting the chloroplast; that stretch reads MALNFNAIASKSQKLPCFALPPKATLRSPKFSM. Fe cation-binding residues include Glu-138, Glu-176, His-179, Glu-229, Glu-262, and His-265.

This sequence belongs to the fatty acid desaturase type 2 family. In terms of assembly, homodimer. It depends on Fe(2+) as a cofactor.

Its subcellular location is the plastid. It localises to the chloroplast. The enzyme catalyses octadecanoyl-[ACP] + 2 reduced [2Fe-2S]-[ferredoxin] + O2 + 2 H(+) = (9Z)-octadecenoyl-[ACP] + 2 oxidized [2Fe-2S]-[ferredoxin] + 2 H2O. It participates in lipid metabolism; fatty acid metabolism. Functionally, converts stearoyl-ACP to oleoyl-ACP by introduction of a cis double bond between carbons 9 and 10 of the acyl chain. This Gossypium hirsutum (Upland cotton) protein is Stearoyl-[acyl-carrier-protein] 9-desaturase, chloroplastic.